Reading from the N-terminus, the 275-residue chain is Diaminopimelate epimerase (275 aa).

Substrate is bound by residues asparagine 12, glutamine 45, and asparagine 65. The active-site Proton donor is cysteine 74. Residues 75 to 76 (GN), asparagine 158, asparagine 191, and 209 to 210 (ER) contribute to the substrate site. Cysteine 218 (proton acceptor) is an active-site residue. Position 219 to 220 (219 to 220 (GT)) interacts with substrate.

Belongs to the diaminopimelate epimerase family. In terms of assembly, homodimer.

It is found in the cytoplasm. It catalyses the reaction (2S,6S)-2,6-diaminopimelate = meso-2,6-diaminopimelate. The protein operates within amino-acid biosynthesis; L-lysine biosynthesis via DAP pathway; DL-2,6-diaminopimelate from LL-2,6-diaminopimelate: step 1/1. Its function is as follows. Catalyzes the stereoinversion of LL-2,6-diaminopimelate (L,L-DAP) to meso-diaminopimelate (meso-DAP), a precursor of L-lysine and an essential component of the bacterial peptidoglycan. The polypeptide is Diaminopimelate epimerase (Shewanella frigidimarina (strain NCIMB 400)).